The primary structure comprises 126 residues: Large ribosomal subunit protein bL12 (126 aa).

Residues 104-116 (AKKEDAEKAKAQL) are compositionally biased toward basic and acidic residues. The interval 104–126 (AKKEDAEKAKAQLEEAGATVELK) is disordered. Residues 117–126 (EEAGATVELK) are compositionally biased toward low complexity.

The protein belongs to the bacterial ribosomal protein bL12 family. As to quaternary structure, homodimer. Part of the ribosomal stalk of the 50S ribosomal subunit. Forms a multimeric L10(L12)X complex, where L10 forms an elongated spine to which 2 to 4 L12 dimers bind in a sequential fashion. Binds GTP-bound translation factors.

Forms part of the ribosomal stalk which helps the ribosome interact with GTP-bound translation factors. Is thus essential for accurate translation. This chain is Large ribosomal subunit protein bL12, found in Bifidobacterium animalis subsp. lactis (strain AD011).